Here is a 285-residue protein sequence, read N- to C-terminus: 2-dehydro-3-deoxyphosphooctonate aldolase (285 aa).

This sequence belongs to the KdsA family.

It is found in the cytoplasm. It carries out the reaction D-arabinose 5-phosphate + phosphoenolpyruvate + H2O = 3-deoxy-alpha-D-manno-2-octulosonate-8-phosphate + phosphate. Its pathway is carbohydrate biosynthesis; 3-deoxy-D-manno-octulosonate biosynthesis; 3-deoxy-D-manno-octulosonate from D-ribulose 5-phosphate: step 2/3. The protein operates within bacterial outer membrane biogenesis; lipopolysaccharide biosynthesis. The protein is 2-dehydro-3-deoxyphosphooctonate aldolase of Acinetobacter baumannii (strain SDF).